Consider the following 260-residue polypeptide: NifU-like protein C1709.19c (260 aa).

The tract at residues 161–231 (IKELIETSIR…IPEVENVVQV (71 aa)) is nifU.

The protein belongs to the NifU family.

The sequence is that of NifU-like protein C1709.19c from Schizosaccharomyces pombe (strain 972 / ATCC 24843) (Fission yeast).